The chain runs to 107 residues: Small ribosomal subunit protein uS10 (107 aa).

This sequence belongs to the universal ribosomal protein uS10 family. Part of the 30S ribosomal subunit.

Involved in the binding of tRNA to the ribosomes. The polypeptide is Small ribosomal subunit protein uS10 (Deinococcus geothermalis (strain DSM 11300 / CIP 105573 / AG-3a)).